A 127-amino-acid polypeptide reads, in one-letter code: Large ribosomal subunit protein uL24B (127 aa).

It belongs to the universal ribosomal protein uL24 family. As to quaternary structure, component of the large ribosomal subunit (LSU). Mature yeast ribosomes consist of a small (40S) and a large (60S) subunit. The 40S small subunit contains 1 molecule of ribosomal RNA (18S rRNA) and 33 different proteins (encoded by 57 genes). The large 60S subunit contains 3 rRNA molecules (25S, 5.8S and 5S rRNA) and 46 different proteins (encoded by 81 genes).

It is found in the cytoplasm. In terms of biological role, component of the ribosome, a large ribonucleoprotein complex responsible for the synthesis of proteins in the cell. The small ribosomal subunit (SSU) binds messenger RNAs (mRNAs) and translates the encoded message by selecting cognate aminoacyl-transfer RNA (tRNA) molecules. The large subunit (LSU) contains the ribosomal catalytic site termed the peptidyl transferase center (PTC), which catalyzes the formation of peptide bonds, thereby polymerizing the amino acids delivered by tRNAs into a polypeptide chain. The nascent polypeptides leave the ribosome through a tunnel in the LSU and interact with protein factors that function in enzymatic processing, targeting, and the membrane insertion of nascent chains at the exit of the ribosomal tunnel. The protein is Large ribosomal subunit protein uL24B of Saccharomyces cerevisiae (strain ATCC 204508 / S288c) (Baker's yeast).